A 1416-amino-acid chain; its full sequence is MGNSPSYNPPAGISPSDWLNLLQSAQRLNPRPSPSDFTDLKNYIHWFHKTQKKPWTFTSGGPASCPPGKFGRVPLVLATLNEVLSNDEGAPGASAPEEQPPPYDPPAVLPIISEGNRNRHRAWALRELQDIKKEIENKAPGSQVWIQTLRLAILQADPTPADLEQLCQYIASPVDQTAHMTSLTAAIAAEAANTLQGFNPQNGTLTQQSAQPNAGDLRSQYQNLWLQAWKNLPTRPSVQPWSTIVQGPAESYVEFVNRLQISLADNLPDGVPKEPIIDSLSYANANKECQQILQGRGLVAAPVGQKLQACAHWAPKTKQPAILVHTPGPKMPGPRQPAPKRPPPGPCYRCLKEGHWARDCPTKTTGPPPGPCPICKDPSHWKRDCPTLKSKKLIEGGPSAPQIITPITDSLSEAELECLLSIPLARSRPSVAVYLSGPWLQPSQNQALMLVDTGAENTVLPQNWLVRDYPRTPAAVLGAGGISRNRYNWLQGPLTLALKPEGPFITIPKILVDTFDKWQILGRDVLSRLQASISIPEEVHPPVVGVLDAPPSHIGLEHLPPPPEVPQFPLNLERLQALQDLVHRSLEAGYISPWDGPGNNPVFPVRKPNGAWRFVHDLRVTNALTKPIPALSPGPPDLTAIPTHLPHIICLDLKDAFFQIPVEDRFRSYFAFTLPTPGGLQPHRRFAWRVLPQGFINSPALFERALQEPLRQVSAAFSQSLLVSYMDDILYVSPTEEQRLQCYQTMAAHLRDLGFQVASEKTRQTPSPVPFLGQMVHERMVTYQSLPTLQISSPISLHQLQTVLGDLQWVSRGTPTTRRPLQLLYSSLKGIDDPRAIIHLSPEQQQGIAELRQALSHNARSRYNEQEPLLAYVHLTRAGSTLVLFQKGAQFPLAYFQTPLTDNQASPWGLLLLLGCQYLQAQALSSYAKTILKYYHNLPKTSLDNWIQSSEDPRVQELLQLWPQISSQGIQPPGPWKTLVTRAEVFLTPQFSPEPIPAALCLFSDGAARRGAYCLWKDHLLDFQAVPAPESAQKGELAGLLAGLAAAPPEPLNIWVDSKYLYSLLRTLVLGAWLQPDPVPSYALLYKSLLRHPAIFVGHVRSHSSASHPIASLNNYVDQLLPLETPEQWHKLTHCNSRALSRWPNPRISAWDPRSPATLCETCQRLNPTGGGKMRTIQRGWAPNHIWQADITHYKYKQFTYALHVFVDTYSGATHASAKRGLTTQTTIEGLLEAIVHLGRPKKLNTDQGANYTSKTFVRFCQQFGISLSHHVPYNPTSSGLVERTNGLLKLLLSKYHLDEPHLPMTQALSRALWTHNQINLLPILKTRWELHHSPPLAVISEGGETPKGSDKLFLYKLPGQNNRRWLGPLPALVEASGGALLATNPPVWVPWRLLKAFKCLKNDGPEDAPNRSSDG.

Residue Gly2 is the site of N-myristoyl glycine; by host attachment. The PPXY motif signature appears at 100 to 103; sequence PPPY. 2 consecutive CCHC-type zinc fingers follow at residues 345 to 362 and 370 to 387; these read GPCYRCLKEGHWARDCPT and GPCPICKDPSHWKRDCPT. The Peptidase A2 domain maps to 447 to 525; that stretch reads ALMLVDTGAE…DKWQILGRDV (79 aa). Catalysis depends on Asp452, which acts as the Protease; shared with dimeric partner. The 191-residue stretch at 586–776 folds into the Reverse transcriptase domain; that stretch reads LEAGYISPWD…SPVPFLGQMV (191 aa). 9 residues coordinate Mg(2+): Asp652, Asp727, Asp728, Asp1005, Glu1036, Asp1057, Asp1118, Asp1190, and Asp1247. The region spanning 996–1126 is the RNase H type-1 domain; the sequence is IPAALCLFSD…VDQLLPLETP (131 aa). Positions 1179-1343 constitute an Integrase catalytic domain; that stretch reads RGWAPNHIWQ…SPPLAVISEG (165 aa). The integrase-type DNA-binding region spans 1352-1400; that stretch reads KLFLYKLPGQNNRRWLGPLPALVEASGGALLATNPPVWVPWRLLKAFKC.

Belongs to the retroviral Pol polyprotein family. Homodimer; the homodimers are part of the immature particles. Interacts with human TSG101 and NEDD4; these interactions are essential for budding and release of viral particles. In terms of assembly, homodimer; further assembles as homohexamers. The cofactor is Mg(2+). In terms of processing, phosphorylation of the matrix protein p15 by MAPK1 seems to play a role in budding. Post-translationally, myristoylated. Myristoylation of the matrix (MA) domain mediates the transport and binding of Gag polyproteins to the host plasma membrane and is required for the assembly of viral particles. Specific enzymatic cleavages by the viral protease yield mature proteins. The polyprotein is cleaved during and after budding, this process is termed maturation. The protease is autoproteolytically processed at its N- and C-termini.

It localises to the virion. The catalysed reaction is Endonucleolytic cleavage to 5'-phosphomonoester.. It carries out the reaction DNA(n) + a 2'-deoxyribonucleoside 5'-triphosphate = DNA(n+1) + diphosphate. Its function is as follows. The matrix domain targets Gag, Gag-Pro and Gag-Pro-Pol polyproteins to the plasma membrane via a multipartite membrane binding signal, that includes its myristoylated N-terminus. Functionally, matrix protein. In terms of biological role, forms the spherical core of the virus that encapsulates the genomic RNA-nucleocapsid complex. Binds strongly to viral nucleic acids and promote their aggregation. Also destabilizes the nucleic acids duplexes via highly structured zinc-binding motifs. Its function is as follows. The aspartyl protease mediates proteolytic cleavages of Gag and Gag-Pol polyproteins during or shortly after the release of the virion from the plasma membrane. Cleavages take place as an ordered, step-wise cascade to yield mature proteins. This process is called maturation. Displays maximal activity during the budding process just prior to particle release from the cell. Functionally, RT is a multifunctional enzyme that converts the viral RNA genome into dsDNA in the cytoplasm, shortly after virus entry into the cell. This enzyme displays a DNA polymerase activity that can copy either DNA or RNA templates, and a ribonuclease H (RNase H) activity that cleaves the RNA strand of RNA-DNA heteroduplexes in a partially processive 3' to 5'-endonucleasic mode. Conversion of viral genomic RNA into dsDNA requires many steps. A tRNA-Pro binds to the primer-binding site (PBS) situated at the 5'-end of the viral RNA. RT uses the 3' end of the tRNA primer to perform a short round of RNA-dependent minus-strand DNA synthesis. The reading proceeds through the U5 region and ends after the repeated (R) region which is present at both ends of viral RNA. The portion of the RNA-DNA heteroduplex is digested by the RNase H, resulting in a ssDNA product attached to the tRNA primer. This ssDNA/tRNA hybridizes with the identical R region situated at the 3' end of viral RNA. This template exchange, known as minus-strand DNA strong stop transfer, can be either intra- or intermolecular. RT uses the 3' end of this newly synthesized short ssDNA to perform the RNA-dependent minus-strand DNA synthesis of the whole template. RNase H digests the RNA template except for a polypurine tract (PPT) situated at the 5' end of the genome. It is not clear if both polymerase and RNase H activities are simultaneous. RNase H probably can proceed both in a polymerase-dependent (RNA cut into small fragments by the same RT performing DNA synthesis) and a polymerase-independent mode (cleavage of remaining RNA fragments by free RTs). Secondly, RT performs DNA-directed plus-strand DNA synthesis using the PPT that has not been removed by RNase H as primer. PPT and tRNA primers are then removed by RNase H. The 3' and 5' ssDNA PBS regions hybridize to form a circular dsDNA intermediate. Strand displacement synthesis by RT to the PBS and PPT ends produces a blunt ended, linear dsDNA copy of the viral genome that includes long terminal repeats (LTRs) at both ends. In terms of biological role, catalyzes viral DNA integration into the host chromosome, by performing a series of DNA cutting and joining reactions. This Bos taurus (Bovine) protein is Gag-Pro-Pol polyprotein (pol).